A 136-amino-acid polypeptide reads, in one-letter code: Histone H3 (136 aa).

The tract at residues 1–43 (MARTKQTARKSTGGKAPRKQLASKAARKSAPSTGGVKKPHRYK) is disordered. At lysine 5 the chain carries N6,N6,N6-trimethyllysine; alternate. Residue lysine 5 is modified to N6,N6-dimethyllysine; alternate. N6-methyllysine; alternate occurs at positions 5 and 10. Lysine 10 is subject to N6-acetyllysine; alternate. Position 11 is a phosphoserine (serine 11). An N6,N6-dimethyllysine; alternate modification is found at lysine 15. An N6-methyllysine; alternate mark is found at lysine 15, lysine 19, lysine 24, lysine 28, and lysine 37. N6-acetyllysine; alternate is present on residues lysine 15, lysine 19, lysine 24, lysine 28, and lysine 37. Lysine 28 and lysine 37 each carry N6,N6,N6-trimethyllysine; alternate. N6,N6-dimethyllysine; alternate occurs at positions 28 and 37. 2 positions are modified to N6-acetyllysine: lysine 57 and lysine 65. N6,N6,N6-trimethyllysine; alternate is present on lysine 80. Residue lysine 80 is modified to N6,N6-dimethyllysine; alternate. Lysine 80 carries the post-translational modification N6-methyllysine; alternate.

It belongs to the histone H3 family. In terms of assembly, the nucleosome is a histone octamer containing two molecules each of H2A, H2B, H3 and H4 assembled in one H3-H4 heterotetramer and two H2A-H2B heterodimers. The octamer wraps approximately 147 bp of DNA. Phosphorylated by IPL1 to form H3S10ph. H3S10ph promotes subsequent H3K14ac formation by GCN5 and is required for transcriptional activation through TBP recruitment to the promoters. In terms of processing, mono-, di- and trimethylated by the COMPASS complex to form H3K4me1/2/3. H3K4me activates gene expression by regulating transcription elongation and plays a role in telomere length maintenance. H3K4me enrichment correlates with transcription levels, and occurs in a 5' to 3' gradient with H3K4me3 enrichment at the 5'-end of genes, shifting to H3K4me2 and then H3K4me1. Methylated by SET2 to form H3K36me. H3K36me represses gene expression. Methylated by DOT1 to form H3K79me. H3K79me is required for association of SIR proteins with telomeric regions and for telomeric silencing. The COMPASS-mediated formation of H3K4me2/3 and the DOT1-mediated formation of H3K79me require H2BK123ub1. Post-translationally, acetylation of histone H3 leads to transcriptional activation. H3K14ac formation by GCN5 is promoted by H3S10ph. H3K14ac can also be formed by ESA1. H3K56ac formation occurs predominantly in newly synthesized H3 molecules during G1, S and G2/M of the cell cycle and may be involved in DNA repair.

The protein localises to the nucleus. The protein resides in the chromosome. Its function is as follows. Core component of nucleosome. Nucleosomes wrap and compact DNA into chromatin, limiting DNA accessibility to the cellular machineries which require DNA as a template. Histones thereby play a central role in transcription regulation, DNA repair, DNA replication and chromosomal stability. DNA accessibility is regulated via a complex set of post-translational modifications of histones, also called histone code, and nucleosome remodeling. In Candida glabrata (strain ATCC 2001 / BCRC 20586 / JCM 3761 / NBRC 0622 / NRRL Y-65 / CBS 138) (Yeast), this protein is Histone H3 (HHT1).